A 3411-amino-acid polypeptide reads, in one-letter code: Genome polyprotein (3411 aa).

Over 1–104 (MSGRKAQGKT…LSSRKRRSHD (104 aa)) the chain is Cytoplasmic. The hydrophobic; homodimerization of capsid protein C stretch occupies residues 38-72 (PGPSRGVQGFIFFFLFNILTGKKITAHLKRLWKML). The propeptide at 102–121 (SHDVLTVQFLILGMLLMTGG) is ER anchor for the capsid protein C, removed in mature form by serine protease NS3. Residues 105 to 125 (VLTVQFLILGMLLMTGGVTLV) form a helical membrane-spanning segment. The Extracellular portion of the chain corresponds to 126-244 (RKNRWLLLNV…GERQLQKIER (119 aa)). N-linked (GlcNAc...) asparagine; by host glycosylation is found at N134 and N150. The chain crosses the membrane as a helical span at residues 245 to 265 (WFVRNPFFAVTALTIAYLVGS). At 266-270 (NMTQR) the chain is on the cytoplasmic side. Residues 271–285 (VVIALLVLAVGPAYS) traverse the membrane as a helical segment. Residues 286–730 (AHCIGITDRD…TVFGSAFQGL (445 aa)) are Extracellular-facing. Disulfide bonds link C288/C315, C345/C401, C345/C406, C359/C390, C377/C401, C377/C406, C467/C568, and C585/C615. The segment at 383 to 396 (DRGWGNGCGLFGKG) is fusion peptide. Residues 731 to 751 (FGGLNWITKVIIGAVLIWVGI) traverse the membrane as a helical segment. The Extracellular portion of the chain corresponds to 752 to 757 (NTRNMT). Residues 758 to 778 (MSMSMILVGVIMMFLSLGVGA) form a helical membrane-spanning segment. At 779 to 1132 (DQGCAINFAK…LVRSWVTAGE (354 aa)) the chain is on the extracellular side. Disulfide bonds link C782-C793, C833-C921, C957-C1002, C1058-C1107, C1069-C1091, and C1090-C1094. N908 and N986 each carry an N-linked (GlcNAc...) asparagine; by host glycan. A helical membrane pass occupies residues 1133 to 1153 (IHAVPFGLVSMMIALEVVLRK). The Cytoplasmic portion of the chain corresponds to 1154-1201 (RQGPKQMLVGGVVLLGAMLVGQVTLLDLLKLTVAVGLHFHEMNNGGDA). Residues 1202–1222 (MYMALIAAFSVRPGLLIGFGL) traverse the membrane as a helical segment. Topologically, residues 1223–1287 (RTLWSPRERL…ILPLMALLTP (65 aa)) are lumenal. Residues 1288–1308 (VTMAEVRLATMLFCTVVIIGV) traverse the membrane as a helical segment. Residues 1309 to 1355 (LYQNSKDTSMQKTIPLVALTLTSYLGLTQPFLGLCAFLATRIFGRRS) are Cytoplasmic-facing. Residues 1356 to 1376 (IPVNEALAAAGLVGVLAGLAF) form a helical membrane-spanning segment. The Lumenal portion of the chain corresponds to 1377-1378 (QE). The helical transmembrane segment at 1379–1399 (MENFLGPIAVGGILMMLVSVA) threads the bilayer. Topologically, residues 1400-1456 (GRVDGLELKKLGEVAWEEEAEISGSSARYDVALSEQGEFKLLSEEKVPWDQVVMTSL) are cytoplasmic. Positions 1407-1446 (LKKLGEVAWEEEAEISGSSARYDVALSEQGEFKLLSEEKV) are interacts with and activates NS3 protease. An intramembrane region (helical) is located at residues 1457-1477 (ALVGAAIHPFALLLVLAGWLF). Over 1478–2157 (HVRGARRSGD…RNALSMMPEA (680 aa)) the chain is Cytoplasmic. The 181-residue stretch at 1485 to 1665 (SGDVLWDIPT…EVKEEGKEEL (181 aa)) folds into the Peptidase S7 domain. Catalysis depends on charge relay system; for serine protease NS3 activity residues H1537, D1561, and S1622. A Helicase ATP-binding domain is found at 1669–1825 (PTMLKKGKTT…HSNGEIEDVQ (157 aa)). Positions 1673–1676 (KKGK) are important for RNA-binding. 1682 to 1689 (FHPGAGKT) is a binding site for ATP. Positions 1773–1776 (DEAH) match the DEAH box motif. Residues 1820 to 1997 (EIEDVQTDIP…VRGGMVAPLY (178 aa)) enclose the Helicase C-terminal domain. K1877 is modified (N6-acetyllysine; by host). Residues 1942–1961 (AAQRRGRIGRNPNRDGDSYY) are disordered. A helical transmembrane segment spans residues 2158 to 2178 (MTIVMLFILAGLLTSGMVIFF). Over 2179–2186 (MSPKGISR) the chain is Lumenal. The helical intramembrane region spans 2187 to 2207 (MSMAMGTMAGCGYLMFLGGVK). The Lumenal segment spans residues 2208–2209 (PT). A helical membrane pass occupies residues 2210–2230 (HISYIMLIFFVLMVVVIPEPG). Topologically, residues 2231 to 2241 (QQRSIQDNQVA) are cytoplasmic. The helical transmembrane segment at 2242–2262 (FLIIGILTLVSVVAANELGML) threads the bilayer. The Lumenal portion of the chain corresponds to 2263 to 2293 (EKTKEDLFGKKNSIPSSASPWSWPDLDLKPG). Positions 2294–2314 (AAWTVYVGIVTMLSPMLHHWI) form an intramembrane region, helical. The Lumenal portion of the chain corresponds to 2315–2360 (KVEYGNLSLSGIAQSASVLSFMDKGIPFMKMNISVIMLLISGWNSI). The helical transmembrane segment at 2361–2380 (TVMPLLCGIGCAMLHWSLIL) threads the bilayer. The Cytoplasmic segment spans residues 2381–2421 (PGIKAQQSKLAQRRVFHGVAKNPVVDGNPTVDIEEAPEMPV). A helical transmembrane segment spans residues 2422–2442 (LYEKKLALYLLLALSLASVAM). Residues 2443–2445 (CRT) are Lumenal-facing. A helical transmembrane segment spans residues 2446 to 2466 (PFSLAEGIVLASAALGPLIEG). The Cytoplasmic segment spans residues 2467–3411 (NTSLLWNGPM…DADLQPGELI (945 aa)). The mRNA cap 0-1 NS5-type MT domain maps to 2507-2771 (GTANGKTLGE…DVTLPIGTRS (265 aa)). S2562 is a binding site for S-adenosyl-L-methionine. Residue S2562 is modified to Phosphoserine. Catalysis depends on K2567, which acts as the For 2'-O-MTase activity. Residues G2592, W2593, T2610, L2611, D2637, and I2638 each coordinate S-adenosyl-L-methionine. D2652 (for 2'-O-MTase activity) is an active-site residue. Position 2653 (I2653) interacts with S-adenosyl-L-methionine. Active-site for 2'-O-MTase activity residues include K2688 and E2724. Y2726 contributes to the S-adenosyl-L-methionine binding site. The short motif at 2878 to 2911 (RKIMKVVNRWLFRHLAREKNPRLCTKEEFIAKVR) is the Nuclear localization signal element. Zn(2+)-binding residues include E2945, H2949, C2954, and C2957. In terms of domain architecture, RdRp catalytic spans 3035–3187 (GGFYADDTAG…RPIDDRFGLA (153 aa)). The Zn(2+) site is built by H3222, C3238, and C3357.

This sequence in the N-terminal section; belongs to the class I-like SAM-binding methyltransferase superfamily. mRNA cap 0-1 NS5-type methyltransferase family. Homodimer. Interacts (via N-terminus) with host EXOC1 (via C-terminus); this interaction results in EXOC1 degradation through the proteasome degradation pathway. In terms of assembly, forms heterodimers with envelope protein E in the endoplasmic reticulum and Golgi. As to quaternary structure, homodimer; in the endoplasmic reticulum and Golgi. Interacts with protein prM. Interacts with non-structural protein 1. Homodimer; Homohexamer when secreted. Interacts with envelope protein E. In terms of assembly, interacts (via N-terminus) with serine protease NS3. As to quaternary structure, forms a heterodimer with serine protease NS3. May form homooligomers. Forms a heterodimer with NS2B. Interacts with non-structural protein 2A (via N-terminus). Interacts with NS4B. Interacts with unphosphorylated RNA-directed RNA polymerase NS5; this interaction stimulates RNA-directed RNA polymerase NS5 guanylyltransferase activity. NS3 interacts with host PDCD6IP; this interaction contributes to virion release. In terms of assembly, interacts with serine protease NS3. As to quaternary structure, homodimer. Interacts with host STAT2; this interaction prevents the establishment of cellular antiviral state. Interacts with serine protease NS3. Interacts with host TRIM23; this interaction leads to NS5 ubiquitination. Post-translationally, specific enzymatic cleavages in vivo yield mature proteins. The nascent capsid protein C contains a C-terminal hydrophobic domain that act as a signal sequence for translocation of prM into the lumen of the ER. Mature capsid protein C is cleaved at a site upstream of this hydrophobic domain by NS3. prM is cleaved in post-Golgi vesicles by a host furin, releasing the mature small envelope protein M, and peptide pr. Non-structural protein 2A-alpha, a C-terminally truncated form of non-structural protein 2A, results from partial cleavage by NS3. Specific enzymatic cleavages in vivo yield mature proteins peptide 2K acts as a signal sequence and is removed from the N-terminus of NS4B by the host signal peptidase in the ER lumen. Signal cleavage at the 2K-4B site requires a prior NS3 protease-mediated cleavage at the 4A-2K site. Cleaved in post-Golgi vesicles by a host furin, releasing the mature small envelope protein M, and peptide pr. This cleavage is incomplete as up to 30% of viral particles still carry uncleaved prM. In terms of processing, N-glycosylated. Post-translationally, N-glycosylated. The excreted form is glycosylated and this is required for efficient secretion of the protein from infected cells. Polyubiquitinated; ubiquitination is probably mediated by host TRIM23 and is prerequisite for NS5-STAT2 interaction. NS5 is not ISGylated or sumoylated. In terms of processing, phosphorylated on serines residues. This phosphorylation may trigger NS5 nuclear localization. Post-translationally, acetylated by host KAT5. Acetylation modulates NS3 RNA-binding and -unwinding activities and plays an important role for viral replication.

It localises to the virion. The protein resides in the host nucleus. It is found in the host cytoplasm. The protein localises to the host perinuclear region. Its subcellular location is the secreted. It localises to the virion membrane. The protein resides in the host endoplasmic reticulum membrane. The enzyme catalyses Selective hydrolysis of -Xaa-Xaa-|-Yaa- bonds in which each of the Xaa can be either Arg or Lys and Yaa can be either Ser or Ala.. It catalyses the reaction RNA(n) + a ribonucleoside 5'-triphosphate = RNA(n+1) + diphosphate. The catalysed reaction is a ribonucleoside 5'-triphosphate + H2O = a ribonucleoside 5'-diphosphate + phosphate + H(+). It carries out the reaction ATP + H2O = ADP + phosphate + H(+). The enzyme catalyses a 5'-end (5'-triphosphoguanosine)-ribonucleoside in mRNA + S-adenosyl-L-methionine = a 5'-end (N(7)-methyl 5'-triphosphoguanosine)-ribonucleoside in mRNA + S-adenosyl-L-homocysteine. It catalyses the reaction a 5'-end (N(7)-methyl 5'-triphosphoguanosine)-ribonucleoside in mRNA + S-adenosyl-L-methionine = a 5'-end (N(7)-methyl 5'-triphosphoguanosine)-(2'-O-methyl-ribonucleoside) in mRNA + S-adenosyl-L-homocysteine + H(+). Plays a role in virus budding by binding to the cell membrane and gathering the viral RNA into a nucleocapsid that forms the core of a mature virus particle. During virus entry, may induce genome penetration into the host cytoplasm after hemifusion induced by the surface proteins. Can migrate to the cell nucleus where it modulates host functions. In terms of biological role, inhibits RNA silencing by interfering with host Dicer. Functionally, prevents premature fusion activity of envelope proteins in trans-Golgi by binding to envelope protein E at pH6.0. After virion release in extracellular space, gets dissociated from E dimers. Its function is as follows. Acts as a chaperone for envelope protein E during intracellular virion assembly by masking and inactivating envelope protein E fusion peptide. prM is the only viral peptide matured by host furin in the trans-Golgi network probably to avoid catastrophic activation of the viral fusion activity in acidic Golgi compartment prior to virion release. prM-E cleavage is inefficient, and many virions are only partially matured. These uncleaved prM would play a role in immune evasion. May play a role in virus budding. Exerts cytotoxic effects by activating a mitochondrial apoptotic pathway through M ectodomain. May display a viroporin activity. In terms of biological role, binds to host cell surface receptor and mediates fusion between viral and cellular membranes. Envelope protein is synthesized in the endoplasmic reticulum in the form of heterodimer with protein prM. They play a role in virion budding in the ER, and the newly formed immature particle is covered with 60 spikes composed of heterodimer between precursor prM and envelope protein E. The virion is transported to the Golgi apparatus where the low pH causes dissociation of PrM-E heterodimers and formation of E homodimers. prM-E cleavage is inefficient, and many virions are only partially matured. These uncleaved prM would play a role in immune evasion. Functionally, involved in immune evasion, pathogenesis and viral replication. Once cleaved off the polyprotein, is targeted to three destinations: the viral replication cycle, the plasma membrane and the extracellular compartment. Essential for viral replication. Required for formation of the replication complex and recruitment of other non-structural proteins to the ER-derived membrane structures. Excreted as a hexameric lipoparticle that plays a role against host immune response. Antagonizing the complement function. Binds to the host macrophages and dendritic cells. Inhibits signal transduction originating from Toll-like receptor 3 (TLR3). Its function is as follows. Component of the viral RNA replication complex that functions in virion assembly and antagonizes the host immune response. Required cofactor for the serine protease function of NS3. May have membrane-destabilizing activity and form viroporins. In terms of biological role, displays three enzymatic activities: serine protease, NTPase and RNA helicase. NS3 serine protease, in association with NS2B, performs its autocleavage and cleaves the polyprotein at dibasic sites in the cytoplasm: C-prM, NS2A-NS2B, NS2B-NS3, NS3-NS4A, NS4A-2K and NS4B-NS5. NS3 RNA helicase binds RNA and unwinds dsRNA in the 3' to 5' direction. Also plays a role in virus assembly. Functionally, regulates the ATPase activity of the NS3 helicase activity. NS4A allows NS3 helicase to conserve energy during unwinding. Its function is as follows. Functions as a signal peptide for NS4B and is required for the interferon antagonism activity of the latter. Induces the formation of ER-derived membrane vesicles where the viral replication takes place. Inhibits interferon (IFN)-induced host STAT1 phosphorylation and nuclear translocation, thereby preventing the establishment of cellular antiviral state by blocking the IFN-alpha/beta pathway. In terms of biological role, replicates the viral (+) and (-) RNA genome, and performs the capping of genomes in the cytoplasm. NS5 methylates viral RNA cap at guanine N-7 and ribose 2'-O positions. Besides its role in RNA genome replication, also prevents the establishment of cellular antiviral state by blocking the interferon-alpha/beta (IFN-alpha/beta) signaling pathway. IFN-I induces binding of NS5 to host IFN-activated transcription factor STAT2, preventing its transcriptional activity. Host TRIM23 is the E3 ligase that interacts with and polyubiquitinates NS5 to promote its binding to STAT2 and trigger IFN-I signaling inhibition. This is Genome polyprotein from Yellow fever virus (strain French neurotropic vaccine FNV) (YFV).